Consider the following 295-residue polypeptide: Guided entry of tail-anchored proteins factor CAMLG (295 aa).

Disordered regions lie at residues 1 to 73 (MEPM…ILNP) and 127 to 148 (GVEL…RGSH). The Cytoplasmic portion of the chain corresponds to 1–188 (MEPMPSATDG…RTTEEFDSFR (188 aa)). Over residues 15 to 24 (ATPSGLSASQ) the composition is skewed to polar residues. Ser53 is modified (phosphoserine). The span at 127-138 (GVELRQRNRGDL) shows a compositional bias: basic and acidic residues. The helical transmembrane segment at 189–206 (IFRLVGCALLALVVRAFV) threads the bilayer. Residues 207-208 (CK) lie on the Lumenal side of the membrane. The cysteines at positions 207 and 283 are disulfide-linked. A helical membrane pass occupies residues 209–227 (YLSIFAPFLTLQLAYMGLY). Residues 228–268 (KYFPKGEKKVKTTVLTAALLLSGIPAEVINRSMDTYSKMGE) are Cytoplasmic-facing. A helical membrane pass occupies residues 269–287 (VFTDLCVYFFTFIFCHEVL). The Lumenal segment spans residues 288–295 (EYWGPEVP).

In terms of assembly, component of the Golgi to ER traffic (GET) complex, which is composed of GET1/WRB, CAMLG/GET2 and GET3/TRC40. Within the complex, GET1 and CAMLG form a heterotetramer which is stabilized by phosphatidylinositol binding and which binds to the GET3 homodimer. Interacts (via C-terminus) with GET1. Interacts (via N-terminus) with GET3. GET3 shows a higher affinity for CAMLG than for GET1. Interacts (via N-terminus) with TNFRSF13B/TACI (via C-terminus). In terms of tissue distribution, in the central nervous system, expressed in astrocytes, microglia and neurons (at protein level).

The protein resides in the endoplasmic reticulum membrane. Required for the post-translational delivery of tail-anchored (TA) proteins to the endoplasmic reticulum. Together with GET1/WRB, acts as a membrane receptor for soluble GET3/TRC40, which recognizes and selectively binds the transmembrane domain of TA proteins in the cytosol. Required for the stability of GET1. Stimulates calcium signaling in T cells through its involvement in elevation of intracellular calcium. Essential for the survival of peripheral follicular B cells. This chain is Guided entry of tail-anchored proteins factor CAMLG, found in Rattus norvegicus (Rat).